The following is a 324-amino-acid chain: Glyoxylate/hydroxypyruvate reductase B (324 aa).

Catalysis depends on residues R237 and E266. H285 (proton donor) is an active-site residue.

This sequence belongs to the D-isomer specific 2-hydroxyacid dehydrogenase family. GhrB subfamily. In terms of assembly, homodimer.

Its subcellular location is the cytoplasm. The catalysed reaction is glycolate + NADP(+) = glyoxylate + NADPH + H(+). The enzyme catalyses (R)-glycerate + NAD(+) = 3-hydroxypyruvate + NADH + H(+). It catalyses the reaction (R)-glycerate + NADP(+) = 3-hydroxypyruvate + NADPH + H(+). Its function is as follows. Catalyzes the NADPH-dependent reduction of glyoxylate and hydroxypyruvate into glycolate and glycerate, respectively. In Salmonella typhi, this protein is Glyoxylate/hydroxypyruvate reductase B.